We begin with the raw amino-acid sequence, 436 residues long: Acetyl-CoA decarbonylase/synthase complex subunit delta (436 aa).

This sequence belongs to the CdhD family. As to quaternary structure, heterodimer of delta and gamma chains. The ACDS complex is made up of alpha, epsilon, beta, gamma and delta chains with a probable stoichiometry of (alpha(2)epsilon(2))(4)-beta(8)-(gamma(1)delta(1))(8).

The protein operates within one-carbon metabolism; methanogenesis from acetate. Part of a complex that catalyzes the reversible cleavage of acetyl-CoA, allowing growth on acetate as sole source of carbon and energy. Probably maintains the overall quaternary structure of the ACDS complex. This Methanosarcina mazei (strain ATCC BAA-159 / DSM 3647 / Goe1 / Go1 / JCM 11833 / OCM 88) (Methanosarcina frisia) protein is Acetyl-CoA decarbonylase/synthase complex subunit delta.